Here is a 478-residue protein sequence, read N- to C-terminus: ATP-dependent DNA helicase RecQ (478 aa).

The Helicase ATP-binding domain maps to 28–202 (IDCLLARRDC…VEGLNLRSPE (175 aa)). ATP is bound at residue 41-48 (LPTGGGKS). Positions 142 to 145 (DEAH) match the DEAH box motif. The region spanning 229-380 (QLRRFLLKHL…RAEVLSQQIP (152 aa)) is the Helicase C-terminal domain. 4 residues coordinate Zn(2+): C447, C467, C470, and C473.

The protein belongs to the helicase family. RecQ subfamily. Mg(2+) is required as a cofactor. It depends on Zn(2+) as a cofactor.

It carries out the reaction Couples ATP hydrolysis with the unwinding of duplex DNA by translocating in the 3'-5' direction.. It catalyses the reaction ATP + H2O = ADP + phosphate + H(+). Its function is as follows. An ATP-dependent DNA helicase which unwinds DNA in a 3'-5' direction. The sequence is that of ATP-dependent DNA helicase RecQ from Synechocystis sp. (strain ATCC 27184 / PCC 6803 / Kazusa).